We begin with the raw amino-acid sequence, 384 residues long: 23S rRNA (uracil(747)-C(5))-methyltransferase RlmC (384 aa).

Residues Cys7, Cys15, Cys18, and Cys94 each contribute to the [4Fe-4S] cluster site. Positions 219, 248, 269, and 316 each coordinate S-adenosyl-L-methionine. Cys343 (nucleophile) is an active-site residue.

Belongs to the class I-like SAM-binding methyltransferase superfamily. RNA M5U methyltransferase family. RlmC subfamily.

It catalyses the reaction uridine(747) in 23S rRNA + S-adenosyl-L-methionine = 5-methyluridine(747) in 23S rRNA + S-adenosyl-L-homocysteine + H(+). Functionally, catalyzes the formation of 5-methyl-uridine at position 747 (m5U747) in 23S rRNA. This is 23S rRNA (uracil(747)-C(5))-methyltransferase RlmC from Shewanella sp. (strain MR-4).